Consider the following 208-residue polypeptide: 3-demethoxyubiquinol 3-hydroxylase (208 aa).

Glu57, Glu87, His90, Glu139, Glu171, and His174 together coordinate Fe cation.

Belongs to the COQ7 family. Requires Fe cation as cofactor.

It localises to the cell membrane. It carries out the reaction a 5-methoxy-2-methyl-3-(all-trans-polyprenyl)benzene-1,4-diol + AH2 + O2 = a 3-demethylubiquinol + A + H2O. Its pathway is cofactor biosynthesis; ubiquinone biosynthesis. Functionally, catalyzes the hydroxylation of 2-nonaprenyl-3-methyl-6-methoxy-1,4-benzoquinol during ubiquinone biosynthesis. The chain is 3-demethoxyubiquinol 3-hydroxylase from Burkholderia pseudomallei (strain 1106a).